The primary structure comprises 380 residues: Tryptophan 2,3-dioxygenase (380 aa).

Residues 57–61 (FIITH) and R128 each bind substrate. Position 313 (H313) interacts with heme. T328 contacts substrate.

The protein belongs to the tryptophan 2,3-dioxygenase family. As to quaternary structure, homotetramer. Dimer of dimers. Heme is required as a cofactor.

It catalyses the reaction L-tryptophan + O2 = N-formyl-L-kynurenine. The protein operates within amino-acid degradation; L-tryptophan degradation via kynurenine pathway; L-kynurenine from L-tryptophan: step 1/2. Its pathway is pigment biosynthesis; ommochrome biosynthesis. Heme-dependent dioxygenase that catalyzes the oxidative cleavage of the L-tryptophan (L-Trp) pyrrole ring and converts L-tryptophan to N-formyl-L-kynurenine. Catalyzes the oxidative cleavage of the indole moiety. The chain is Tryptophan 2,3-dioxygenase from Drosophila willistoni (Fruit fly).